Consider the following 424-residue polypeptide: NuA4 complex subunit EAF3 homolog (424 aa).

Residues 23 to 73 (VDGERVLCFHGPLIYEAKVLKTKPDATPVEYYIHYAGWSKNWDEWVPENRV) enclose the Tudor-knot domain. The interval 88 to 243 (ARQCGERSKK…STPTTEPAPC (156 aa)) is disordered. Basic residues predominate over residues 97–106 (KDNKKGSAKA). Basic and acidic residues predominate over residues 107–116 (KKMEQMRNES). Ser-119 is subject to Phosphoserine. Residues 122–165 (SKDSNTSQSTASSTPTTSAGPGSKSEAGSTGTTTTNSTANSTTS) show a composition bias toward low complexity. A phosphothreonine mark is found at Thr-175, Thr-183, Thr-196, and Thr-197. Ser-211 is subject to Phosphoserine. Over residues 232–242 (TPSTPTTEPAP) the composition is skewed to low complexity. Thr-235 carries the phosphothreonine modification. Residues 252–424 (AKVEVKIKIP…VDPEYVRNAQ (173 aa)) form the MRG domain.

In terms of assembly, component of the Tip60 chromatin-remodeling complex which contains the catalytic subunit Tip60 and the subunits Domino, Tra1, Brd8, E(Pc), DMAP1, Pontin, Reptin, Ing3, Act87E, BAP55, Mrg15, MrgBP, Gas41 and YL-1.

It localises to the nucleus. Part of the Tip60 chromatin-remodeling complex which is involved in DNA repair. Upon induction of DNA double-strand breaks, this complex acetylates phosphorylated H2AV in nucleosomes and exchanges it with unmodified H2AV. This is NuA4 complex subunit EAF3 homolog (MRG15) from Drosophila melanogaster (Fruit fly).